The chain runs to 230 residues: Large ribosomal subunit protein uL1 (230 aa).

The protein belongs to the universal ribosomal protein uL1 family. In terms of assembly, part of the 50S ribosomal subunit.

Functionally, binds directly to 23S rRNA. The L1 stalk is quite mobile in the ribosome, and is involved in E site tRNA release. Its function is as follows. Protein L1 is also a translational repressor protein, it controls the translation of the L11 operon by binding to its mRNA. The polypeptide is Large ribosomal subunit protein uL1 (Bacillus cereus (strain G9842)).